Here is a 561-residue protein sequence, read N- to C-terminus: Arginine--tRNA ligase (561 aa).

The short motif at 129 to 139 is the 'HIGH' region element; that stretch reads ANPTGPLHIGH.

This sequence belongs to the class-I aminoacyl-tRNA synthetase family. As to quaternary structure, monomer.

The protein localises to the cytoplasm. The enzyme catalyses tRNA(Arg) + L-arginine + ATP = L-arginyl-tRNA(Arg) + AMP + diphosphate. This chain is Arginine--tRNA ligase, found in Geotalea daltonii (strain DSM 22248 / JCM 15807 / FRC-32) (Geobacter daltonii).